We begin with the raw amino-acid sequence, 377 residues long: MEASLSNHILNFSVDLYKQLKPSGKDTAGNVFCSPFSIAAALSMALAGARGNTAKQIAAILHTNDDKIHDHFSNFLRKLPSYAPDVALHIANRMYSEQTFHLKAEYTTLLQKSYDSTIKAVDFAGNADRVRLEVNAWVEEVTRSKIRDLLAPGTVDALTSLILVNAIYFKGLWECQFKPSATKPGDFHLTPQTSKTVDMMHQKGDFKMGHCSDLKVTALEIPYKGNKTSMVILLPKDVEGLSVLEEHLTAPKLSALLGGMYVTSDVYLRLPKFKLEQSIGLKDVLMAMGVKDFFTSLADLSGISATGNLCASDVIHKAFVEVNEEGTEAAAANAIRLRYMCLRFPQVINFFVDRPFMFLIHSHDPDVVLFMGSIREL.

2 N-linked (GlcNAc...) asparagine glycosylation sites follow: asparagine 11 and asparagine 226.

This sequence belongs to the serpin family. In terms of tissue distribution, female salivary gland. Not detected in midgut and other tissues.

Its subcellular location is the secreted. Salivary protein with immunosuppressive properties that can modulate blood feeding of ticks on vertebrate species. Inhibits proliferation of bovine peripheral blood mononuclear cells (PBMCs). Inhibits IFN-gamma (IFNG) production by bovine PBMCs. The chain is Ipis-1 from Ixodes persulcatus (Taiga tick).